Reading from the N-terminus, the 987-residue chain is Eukaryotic translation initiation factor 3 subunit A (987 aa).

Residues 93 to 122 (LHLATDKAEQARSQADALEEALDVDDLEAD) are a coiled coil. Positions 316–513 (LQLIASSVVL…GVVIFGNLGI (198 aa)) constitute a PCI domain. 2 coiled-coil regions span residues 556–742 (TVEK…EKNR) and 797–858 (LKIE…REEL). The segment covering 808 to 859 (QEEEEARKQEEAERLKKVEAERKANLDKAFEKQRQREIELEEKSRREREELL) has biased composition (basic and acidic residues). The segment at 808–987 (QEEEEARKQE…GSSRPRPTQR (180 aa)) is disordered. The segment covering 872 to 894 (PTVTPVGTTAPAAAAAAAGAPAA) has biased composition (low complexity). Polar residues-rich tracts occupy residues 905–916 (TEVSGPSAPTSS) and 976–987 (TFGSSRPRPTQR).

The protein belongs to the eIF-3 subunit A family. In terms of assembly, component of the eukaryotic translation initiation factor 3 (eIF-3) complex. Binds to the translation initiation factor TIF3H1.

It is found in the cytoplasm. RNA-binding component of the eukaryotic translation initiation factor 3 (eIF-3) complex, which is involved in protein synthesis of a specialized repertoire of mRNAs and, together with other initiation factors, stimulates binding of mRNA and methionyl-tRNAi to the 40S ribosome. The eIF-3 complex specifically targets and initiates translation of a subset of mRNAs involved in cell proliferation. This is Eukaryotic translation initiation factor 3 subunit A (TIF3A1) from Arabidopsis thaliana (Mouse-ear cress).